Consider the following 58-residue polypeptide: MATVKVTLIKSVSGRIPNHKLCVKGLGLRRIGHTVEVQDTPENRGMINKAYYMLKVEG.

Belongs to the universal ribosomal protein uL30 family. In terms of assembly, part of the 50S ribosomal subunit.

This chain is Large ribosomal subunit protein uL30, found in Pseudomonas entomophila (strain L48).